The sequence spans 142 residues: Transcription antitermination protein NusB (142 aa).

This sequence belongs to the NusB family.

Involved in transcription antitermination. Required for transcription of ribosomal RNA (rRNA) genes. Binds specifically to the boxA antiterminator sequence of the ribosomal RNA (rrn) operons. The polypeptide is Transcription antitermination protein NusB (Buchnera aphidicola subsp. Cinara cedri (strain Cc)).